Here is a 277-residue protein sequence, read N- to C-terminus: Phosphatidylglycerol--prolipoprotein diacylglyceryl transferase (277 aa).

Helical transmembrane passes span 17 to 37, 63 to 83, and 101 to 121; these read LAIHWYGLSYLAAFGLFMLLG, ILFLGVAGVVLGGRLGYCLFY, and GGMAFHGGLLGVIVAMLWFAH. Arg146 is a binding site for a 1,2-diacyl-sn-glycero-3-phospho-(1'-sn-glycerol). The next 3 helical transmembrane spans lie at 182-202, 209-229, and 234-254; these read SQVYQFLLEGLLLFVLLWLYA, GQVAAAFLVGYGVLRFIAEQF, and AFLGILALGMSMGQWLCLPMI.

The protein belongs to the Lgt family.

The protein localises to the cell inner membrane. It carries out the reaction L-cysteinyl-[prolipoprotein] + a 1,2-diacyl-sn-glycero-3-phospho-(1'-sn-glycerol) = an S-1,2-diacyl-sn-glyceryl-L-cysteinyl-[prolipoprotein] + sn-glycerol 1-phosphate + H(+). It participates in protein modification; lipoprotein biosynthesis (diacylglyceryl transfer). Functionally, catalyzes the transfer of the diacylglyceryl group from phosphatidylglycerol to the sulfhydryl group of the N-terminal cysteine of a prolipoprotein, the first step in the formation of mature lipoproteins. This is Phosphatidylglycerol--prolipoprotein diacylglyceryl transferase from Verminephrobacter eiseniae (strain EF01-2).